The following is a 118-amino-acid chain: Large ribosomal subunit protein uL18 (118 aa).

It belongs to the universal ribosomal protein uL18 family. As to quaternary structure, part of the 50S ribosomal subunit; part of the 5S rRNA/L5/L18/L25 subcomplex. Contacts the 5S and 23S rRNAs.

In terms of biological role, this is one of the proteins that bind and probably mediate the attachment of the 5S RNA into the large ribosomal subunit, where it forms part of the central protuberance. The chain is Large ribosomal subunit protein uL18 from Rickettsia conorii (strain ATCC VR-613 / Malish 7).